The primary structure comprises 464 residues: Probable pectin lyase F (464 aa).

Positions 1–20 (MAIIRSVIAATALLGAAVNA) are cleaved as a signal peptide. An intrachain disulfide couples cysteine 80 to cysteine 103. Residue asparagine 126 is glycosylated (N-linked (GlcNAc...) asparagine). Arginine 252 is an active-site residue. The cysteines at positions 319 and 327 are disulfide-linked. The tract at residues 424-464 (EHEVSTPAVPTPTPVPSSVGSHGSTAGSSHPPAFSRTSFES) is disordered. Residues 439–448 (PSSVGSHGST) are compositionally biased toward low complexity.

Belongs to the polysaccharide lyase 1 family.

Its subcellular location is the secreted. The catalysed reaction is Eliminative cleavage of (1-&gt;4)-alpha-D-galacturonan methyl ester to give oligosaccharides with 4-deoxy-6-O-methyl-alpha-D-galact-4-enuronosyl groups at their non-reducing ends.. In terms of biological role, pectinolytic enzymes consist of four classes of enzymes: pectin lyase, polygalacturonase, pectin methylesterase and rhamnogalacturonase. Among pectinolytic enzymes, pectin lyase is the most important in depolymerization of pectin, since it cleaves internal glycosidic bonds of highly methylated pectins. This is Probable pectin lyase F (pelF) from Emericella nidulans (strain FGSC A4 / ATCC 38163 / CBS 112.46 / NRRL 194 / M139) (Aspergillus nidulans).